A 648-amino-acid polypeptide reads, in one-letter code: MTKSKPATKKNEWTVKDSCSLYGLDLWGEEYFSINDSGNVTVSPQGKEGNSLELTHLLEELKGRNLNTPLLLRFDDILEDRLKKLHQAFENAINQYGYNNDYQGVFPIKCNQQRHVVEEIVTIGRKWHFGLEAGSKAELLIALALVNDPKAFLICNGYKDNRYIETTILARQLGRQPIVVIEQSDEVGRIIKASQKLGAAPLIGIRAKLSNQSSGRWGNSVGEKSKFGLSIPEILKAVQELTAAGLLNELILLHFHVGSQINDIAILKNALQEASQIYVELNRLGAPMGHLDVGGGLGVDYDGSRTATSASTNYSLQNYANDVVATIQECCKAKKVKVPKLISESGRFLSSHFSILIFNVLGTSSVPTQIAIETSNECLSVKNLRETLMILHQICEEKKIDVSKLQEAWNDALKFKEDALNAFRLGFIDLTERATAEQLTWACAKQIAAHLPNDLKIPKELLAINKGLTETYYANISIFRSAPDTWAIQQLFPLLPIHRLQEKPDQLGHFADLTCDSDGKLARFINNGQEKFLLELHTVKANENYWIGMFLGGAYQEVMGNLHNLFGSTNAIHIRLTKNGKYKLDHVVRGNSKSDVLQAMEHDSEQLLERIRMASESAIQQGSLKINDAQRLIEHVETSLRQSTYLQE.

Lys109 is subject to N6-(pyridoxal phosphate)lysine. Residue 291 to 301 participates in substrate binding; it reads LDVGGGLGVDY.

It belongs to the Orn/Lys/Arg decarboxylase class-II family. SpeA subfamily. It depends on Mg(2+) as a cofactor. Pyridoxal 5'-phosphate serves as cofactor.

It catalyses the reaction L-arginine + H(+) = agmatine + CO2. Its function is as follows. Catalyzes the biosynthesis of agmatine from arginine. This is Biosynthetic arginine decarboxylase from Prochlorococcus marinus (strain SARG / CCMP1375 / SS120).